Consider the following 201-residue polypeptide: Ribosomal RNA large subunit methyltransferase E (201 aa).

Residues glycine 40, tryptophan 42, aspartate 62, aspartate 78, and aspartate 101 each contribute to the S-adenosyl-L-methionine site. The active-site Proton acceptor is the lysine 141.

This sequence belongs to the class I-like SAM-binding methyltransferase superfamily. RNA methyltransferase RlmE family.

The protein resides in the cytoplasm. The enzyme catalyses uridine(2552) in 23S rRNA + S-adenosyl-L-methionine = 2'-O-methyluridine(2552) in 23S rRNA + S-adenosyl-L-homocysteine + H(+). Specifically methylates the uridine in position 2552 of 23S rRNA at the 2'-O position of the ribose in the fully assembled 50S ribosomal subunit. This Anaplasma marginale (strain Florida) protein is Ribosomal RNA large subunit methyltransferase E.